A 366-amino-acid chain; its full sequence is tRNA/tmRNA (uracil-C(5))-methyltransferase (366 aa).

Positions 190, 218, 223, 239, and 299 each coordinate S-adenosyl-L-methionine. Residue Cys324 is the Nucleophile of the active site. Glu358 acts as the Proton acceptor in catalysis.

It belongs to the class I-like SAM-binding methyltransferase superfamily. RNA M5U methyltransferase family. TrmA subfamily.

The enzyme catalyses uridine(54) in tRNA + S-adenosyl-L-methionine = 5-methyluridine(54) in tRNA + S-adenosyl-L-homocysteine + H(+). It catalyses the reaction uridine(341) in tmRNA + S-adenosyl-L-methionine = 5-methyluridine(341) in tmRNA + S-adenosyl-L-homocysteine + H(+). In terms of biological role, dual-specificity methyltransferase that catalyzes the formation of 5-methyluridine at position 54 (m5U54) in all tRNAs, and that of position 341 (m5U341) in tmRNA (transfer-mRNA). This chain is tRNA/tmRNA (uracil-C(5))-methyltransferase, found in Escherichia coli (strain ATCC 8739 / DSM 1576 / NBRC 3972 / NCIMB 8545 / WDCM 00012 / Crooks).